The chain runs to 215 residues: Large ribosomal subunit protein uL16 (215 aa).

Positions 1-22 (MGRRPARCYRQPKGKPYPKSRY) are disordered.

It belongs to the universal ribosomal protein uL16 family.

The chain is Large ribosomal subunit protein uL16 (RPL10) from Tetrahymena thermophila (strain SB210).